The following is a 379-amino-acid chain: tRNA-specific 2-thiouridylase MnmA (379 aa).

ATP-binding positions include 6–13 (AMSGGVDS) and Leu-32. The active-site Nucleophile is the Cys-101. The cysteines at positions 101 and 199 are disulfide-linked. Gly-125 provides a ligand contact to ATP. Positions 148 to 150 (KDQ) are interaction with tRNA. Cys-199 acts as the Cysteine persulfide intermediate in catalysis.

The protein belongs to the MnmA/TRMU family.

It localises to the cytoplasm. It carries out the reaction S-sulfanyl-L-cysteinyl-[protein] + uridine(34) in tRNA + AH2 + ATP = 2-thiouridine(34) in tRNA + L-cysteinyl-[protein] + A + AMP + diphosphate + H(+). Catalyzes the 2-thiolation of uridine at the wobble position (U34) of tRNA, leading to the formation of s(2)U34. In Paenarthrobacter aurescens (strain TC1), this protein is tRNA-specific 2-thiouridylase MnmA.